The chain runs to 944 residues: Leucine--tRNA ligase (944 aa).

Residues 40 to 51 carry the 'HIGH' region motif; it reads PYPSGAGLHVGH. The 'KMSKS' region signature appears at 718–722; it reads KMSKS. Lys721 is a binding site for ATP.

This sequence belongs to the class-I aminoacyl-tRNA synthetase family.

Its subcellular location is the cytoplasm. It catalyses the reaction tRNA(Leu) + L-leucine + ATP = L-leucyl-tRNA(Leu) + AMP + diphosphate. In Phocaeicola vulgatus (strain ATCC 8482 / DSM 1447 / JCM 5826 / CCUG 4940 / NBRC 14291 / NCTC 11154) (Bacteroides vulgatus), this protein is Leucine--tRNA ligase.